The following is a 184-amino-acid chain: MILSDRDLKYYLEKSWIKIQPLREDTIRENGVDLRVGNEIARFKKTDKIFDPDNPDPSFFQTEKGEEFIIQPYEHVLLTTEEYIELNNDVMAFVNLRSTFARLGLFIPPTIVDAGFKGQVTIEVVGSSFPVKLKRSTRFIHLIFARTLTPVEYPYQGKYQGQKGVTLPKFNSQISSFYYQHQSI.

Residues 97 to 102 (RSTFAR) and Asp-113 each bind dCTP. Residue Glu-123 is the Proton donor/acceptor of the active site. 2 residues coordinate dCTP: Tyr-155 and Gln-162.

The protein belongs to the dCTP deaminase family. Homotrimer.

The enzyme catalyses dCTP + H2O + H(+) = dUTP + NH4(+). It functions in the pathway pyrimidine metabolism; dUMP biosynthesis; dUMP from dCTP (dUTP route): step 1/2. In terms of biological role, catalyzes the deamination of dCTP to dUTP. The sequence is that of dCTP deaminase from Saccharolobus solfataricus (strain ATCC 35092 / DSM 1617 / JCM 11322 / P2) (Sulfolobus solfataricus).